Here is a 70-residue protein sequence, read N- to C-terminus: Beta-insect excitatory toxin LqqIT1 (70 aa).

The region spanning 2 to 65 is the LCN-type CS-alpha/beta domain; that stretch reads KNGYAVDSSG…ISDARKKYCD (64 aa). 4 disulfides stabilise this stretch: C16–C37, C22–C42, C26–C44, and C38–C64.

It belongs to the long (4 C-C) scorpion toxin superfamily. Sodium channel inhibitor family. Beta subfamily. As to expression, expressed by the venom gland.

It is found in the secreted. Its function is as follows. Excitatory insect beta-toxins induce a spastic paralysis. They bind voltage-independently at site-4 of sodium channels (Nav) and shift the voltage of activation toward more negative potentials thereby affecting sodium channel activation and promoting spontaneous and repetitive firing. In vivo, this toxin induces a fast excitatory contraction paralysis on fly larvae. It is active only on insects. The polypeptide is Beta-insect excitatory toxin LqqIT1 (Leiurus quinquestriatus quinquestriatus (Egyptian scorpion)).